The chain runs to 64 residues: Conotoxin Leo-T1 (64 aa).

Residues 1–22 (MRCLPVFIILLLLIPSAPSVDA) form the signal peptide. Positions 23–48 (QPKTEDDVPLASLHDNAKLTLQGLWD) are excised as a propeptide.

The protein belongs to the conotoxin T superfamily. Contains 2 disulfide bonds that can be either 'C1-C3, C2-C4' or 'C1-C4, C2-C3', since these disulfide connectivities have been observed for conotoxins with cysteine framework V (for examples, see AC P0DQQ7 and AC P81755). In terms of tissue distribution, expressed by the venom duct.

The protein resides in the secreted. The protein is Conotoxin Leo-T1 of Conus leopardus (Leopard cone).